Reading from the N-terminus, the 82-residue chain is UPF0213 protein MW0443 (82 aa).

The region spanning 2-77 (DSHFVYIVKC…KTYTRQKKLR (76 aa)) is the GIY-YIG domain.

Belongs to the UPF0213 family.

This chain is UPF0213 protein MW0443, found in Staphylococcus aureus (strain MW2).